The primary structure comprises 400 residues: S-adenosylmethionine synthase (400 aa).

136-141 (GTGSTD) contributes to the ATP binding site.

Belongs to the AdoMet synthase 2 family. Requires Mg(2+) as cofactor.

It carries out the reaction L-methionine + ATP + H2O = S-adenosyl-L-methionine + phosphate + diphosphate. It functions in the pathway amino-acid biosynthesis; S-adenosyl-L-methionine biosynthesis; S-adenosyl-L-methionine from L-methionine: step 1/1. Its function is as follows. Catalyzes the formation of S-adenosylmethionine from methionine and ATP. This chain is S-adenosylmethionine synthase, found in Methanoregula boonei (strain DSM 21154 / JCM 14090 / 6A8).